A 213-amino-acid polypeptide reads, in one-letter code: Thiamine-phosphate synthase (213 aa).

4-amino-2-methyl-5-(diphosphooxymethyl)pyrimidine-binding positions include 40-44 (QFREK) and asparagine 75. The Mg(2+) site is built by aspartate 76 and aspartate 95. Serine 113 is a binding site for 4-amino-2-methyl-5-(diphosphooxymethyl)pyrimidine. 139–141 (TPS) lines the 2-[(2R,5Z)-2-carboxy-4-methylthiazol-5(2H)-ylidene]ethyl phosphate pocket. Residue lysine 142 coordinates 4-amino-2-methyl-5-(diphosphooxymethyl)pyrimidine. Residues glycine 171 and 191–192 (IS) each bind 2-[(2R,5Z)-2-carboxy-4-methylthiazol-5(2H)-ylidene]ethyl phosphate.

The protein belongs to the thiamine-phosphate synthase family. Mg(2+) is required as a cofactor.

It catalyses the reaction 2-[(2R,5Z)-2-carboxy-4-methylthiazol-5(2H)-ylidene]ethyl phosphate + 4-amino-2-methyl-5-(diphosphooxymethyl)pyrimidine + 2 H(+) = thiamine phosphate + CO2 + diphosphate. It carries out the reaction 2-(2-carboxy-4-methylthiazol-5-yl)ethyl phosphate + 4-amino-2-methyl-5-(diphosphooxymethyl)pyrimidine + 2 H(+) = thiamine phosphate + CO2 + diphosphate. The catalysed reaction is 4-methyl-5-(2-phosphooxyethyl)-thiazole + 4-amino-2-methyl-5-(diphosphooxymethyl)pyrimidine + H(+) = thiamine phosphate + diphosphate. The protein operates within cofactor biosynthesis; thiamine diphosphate biosynthesis; thiamine phosphate from 4-amino-2-methyl-5-diphosphomethylpyrimidine and 4-methyl-5-(2-phosphoethyl)-thiazole: step 1/1. In terms of biological role, condenses 4-methyl-5-(beta-hydroxyethyl)thiazole monophosphate (THZ-P) and 2-methyl-4-amino-5-hydroxymethyl pyrimidine pyrophosphate (HMP-PP) to form thiamine monophosphate (TMP). This chain is Thiamine-phosphate synthase, found in Staphylococcus aureus (strain MSSA476).